The following is a 635-amino-acid chain: DNA-directed RNA polymerase III subunit rpc3 (635 aa).

Disordered regions lie at residues 131–164 (PEQSHTNGVDKEHDEVDGDEEQPNGLSGDHSDQQ), 246–295 (VPRG…GYDT), and 386–424 (SGSIGPMEISQPDNRRGKRPLEDDVNGTNHEGANGLSSG). The span at 272 to 292 (SVDEDDEQDEEENEWSDDEMG) shows a compositional bias: acidic residues. A compositionally biased stretch (basic and acidic residues) spans 398-407 (DNRRGKRPLE). Residues 411 to 424 (NGTNHEGANGLSSG) are compositionally biased toward polar residues. Residues 562-583 (TYKAMSRCFQRLRFERNRLKEF) form a leucine-zipper region.

It belongs to the RNA polymerase beta chain family. Component of the RNA polymerase III (Pol III) complex consisting of 17 subunits.

The protein localises to the nucleus. Its function is as follows. DNA-dependent RNA polymerase catalyzes the transcription of DNA into RNA using the four ribonucleoside triphosphates as substrates. Specific core component of RNA polymerase III which synthesizes small RNAs, such as 5S rRNA and tRNAs. The sequence is that of DNA-directed RNA polymerase III subunit rpc3 (rpc82) from Aspergillus clavatus (strain ATCC 1007 / CBS 513.65 / DSM 816 / NCTC 3887 / NRRL 1 / QM 1276 / 107).